A 419-amino-acid chain; its full sequence is Tetraspanning orphan receptor (419 aa).

At 1-28 the chain is on the cytoplasmic side; it reads MPRAPALLTNDARHQFTCCLCLHVRTGT. A helical membrane pass occupies residues 29 to 49; it reads IIFGITQIIIQLVFISFLFLM. The Extracellular portion of the chain corresponds to 50–165; sequence TFNPRLIPED…EVKIKHFSPY (116 aa). A helical membrane pass occupies residues 166–186; it reads IAVCVTTFSLAFCCFMVHGAI. Topologically, residues 187-193 are cytoplasmic; the sequence is TKQPTHL. The helical transmembrane segment at 194–214 threads the bilayer; it reads LPFFFIQVFDLIICLIHILGF. The Extracellular segment spans residues 215-240; that stretch reads MSSTSDLRLMIHTKTGPIYIKSTGFT. The helical transmembrane segment at 241-261 threads the bilayer; that stretch reads FIILSISCMMLAFKAYCLGMV. Residues 262-419 are Cytoplasmic-facing; sequence WDCYKYLMLN…SAPSNAHSSC (158 aa). Residues 303–316 show a composition bias toward low complexity; that stretch reads NNSIGNSGSPNEPN. Residues 303-328 form a disordered region; the sequence is NNSIGNSGSPNEPNTRPRPEPITYDP.

Interacts (via N-terminal extracellular domain) with human C2a. Post-translationally, phosphorylated on tyrosine residues.

Its subcellular location is the cell membrane. In terms of biological role, cell surface receptor that binds to human complement C2a protein. This results in inhibition of the classical and lectin pathways of complement activation, probably due to interference with binding of C2a to C4b and interference with cleavage by C1 or MASP2 such that C3 convertase cannot be formed. This infers resistance to complement-mediated cell lysis, allowing parasite survival and infection. This is Tetraspanning orphan receptor from Schistosoma mansoni (Blood fluke).